The following is a 278-amino-acid chain: Tryptophan synthase alpha chain (278 aa).

Residues glutamate 50 and aspartate 61 each act as proton acceptor in the active site.

The protein belongs to the TrpA family. In terms of assembly, tetramer of two alpha and two beta chains.

The catalysed reaction is (1S,2R)-1-C-(indol-3-yl)glycerol 3-phosphate + L-serine = D-glyceraldehyde 3-phosphate + L-tryptophan + H2O. Its pathway is amino-acid biosynthesis; L-tryptophan biosynthesis; L-tryptophan from chorismate: step 5/5. The alpha subunit is responsible for the aldol cleavage of indoleglycerol phosphate to indole and glyceraldehyde 3-phosphate. This is Tryptophan synthase alpha chain from Rhodopseudomonas palustris (strain BisB5).